Reading from the N-terminus, the 138-residue chain is Cysteine desulfuration protein SufE (138 aa).

Cys-51 functions as the Cysteine persulfide intermediate in the catalytic mechanism.

It belongs to the SufE family. As to quaternary structure, homodimer. Interacts with SufS.

Its subcellular location is the cytoplasm. Its pathway is cofactor biosynthesis; iron-sulfur cluster biosynthesis. Participates in cysteine desulfuration mediated by SufS. Cysteine desulfuration mobilizes sulfur from L-cysteine to yield L-alanine and constitutes an essential step in sulfur metabolism for biosynthesis of a variety of sulfur-containing biomolecules. Functions as a sulfur acceptor for SufS, by mediating the direct transfer of the sulfur atom from the S-sulfanylcysteine of SufS, an intermediate product of cysteine desulfuration process. The sequence is that of Cysteine desulfuration protein SufE from Escherichia coli O6:K15:H31 (strain 536 / UPEC).